The chain runs to 189 residues: ATP synthase subunit b (189 aa).

The helical transmembrane segment at 23 to 43 (IEIVLSLVVFGLLLFAVWKFV) threads the bilayer.

Belongs to the ATPase B chain family. F-type ATPases have 2 components, F(1) - the catalytic core - and F(0) - the membrane proton channel. F(1) has five subunits: alpha(3), beta(3), gamma(1), delta(1), epsilon(1). F(0) has three main subunits: a(1), b(2) and c(10-14). The alpha and beta chains form an alternating ring which encloses part of the gamma chain. F(1) is attached to F(0) by a central stalk formed by the gamma and epsilon chains, while a peripheral stalk is formed by the delta and b chains.

It is found in the cell membrane. F(1)F(0) ATP synthase produces ATP from ADP in the presence of a proton or sodium gradient. F-type ATPases consist of two structural domains, F(1) containing the extramembraneous catalytic core and F(0) containing the membrane proton channel, linked together by a central stalk and a peripheral stalk. During catalysis, ATP synthesis in the catalytic domain of F(1) is coupled via a rotary mechanism of the central stalk subunits to proton translocation. In terms of biological role, component of the F(0) channel, it forms part of the peripheral stalk, linking F(1) to F(0). This Nocardioides sp. (strain ATCC BAA-499 / JS614) protein is ATP synthase subunit b.